The primary structure comprises 102 residues: Protein translation factor SUI1 homolog (102 aa).

This sequence belongs to the SUI1 family.

The polypeptide is Protein translation factor SUI1 homolog (Methanosarcina mazei (strain ATCC BAA-159 / DSM 3647 / Goe1 / Go1 / JCM 11833 / OCM 88) (Methanosarcina frisia)).